A 187-amino-acid polypeptide reads, in one-letter code: Orotate phosphoribosyltransferase (187 aa).

Residues arginine 99, lysine 100, lysine 103, histidine 105, and 125–133 (DDVITTGGS) contribute to the 5-phospho-alpha-D-ribose 1-diphosphate site. 2 residues coordinate orotate: threonine 129 and arginine 157.

This sequence belongs to the purine/pyrimidine phosphoribosyltransferase family. PyrE subfamily. As to quaternary structure, homodimer. The cofactor is Mg(2+).

The enzyme catalyses orotidine 5'-phosphate + diphosphate = orotate + 5-phospho-alpha-D-ribose 1-diphosphate. It participates in pyrimidine metabolism; UMP biosynthesis via de novo pathway; UMP from orotate: step 1/2. Catalyzes the transfer of a ribosyl phosphate group from 5-phosphoribose 1-diphosphate to orotate, leading to the formation of orotidine monophosphate (OMP). This is Orotate phosphoribosyltransferase from Leptospira borgpetersenii serovar Hardjo-bovis (strain JB197).